Reading from the N-terminus, the 240-residue chain is DNA repair protein RecO (240 aa).

Belongs to the RecO family.

In terms of biological role, involved in DNA repair and RecF pathway recombination. This chain is DNA repair protein RecO, found in Xanthomonas oryzae pv. oryzae (strain MAFF 311018).